A 207-amino-acid polypeptide reads, in one-letter code: MEELLKELERIREEAKPLVEQRFEEFKRLGEEGTEEDLFCELSFCVLTANWSAEGGIRAQKEIGKGFVHLPLEELAEKLREVGHRYPQKRAEFIVENRKLLGKLKNLVKGDPFQSREFLVRNAKGIGWKEASHFLRNTGVEDLAILDKHVLKLMKRHGLIQEIPKGWSKKRYLYVEEILRKVAEAFGESPGKFDLYLWYLVKGKVDK.

Active-site residues include Lys-129 and Asp-147.

This sequence belongs to the type-2 OGG1 family.

The catalysed reaction is 2'-deoxyribonucleotide-(2'-deoxyribose 5'-phosphate)-2'-deoxyribonucleotide-DNA = a 3'-end 2'-deoxyribonucleotide-(2,3-dehydro-2,3-deoxyribose 5'-phosphate)-DNA + a 5'-end 5'-phospho-2'-deoxyribonucleoside-DNA + H(+). Catalyzes the excision of an oxidatively damaged form of guanine (7,8-dihydro-8-oxoguanine = 8-oxoG) from DNA. Also cleaves the DNA backbone at apurinic/apyrimidinic sites (AP sites). This is 8-oxoguanine DNA glycosylase/AP lyase from Thermotoga sp. (strain RQ2).